We begin with the raw amino-acid sequence, 348 residues long: Probable dual-specificity RNA methyltransferase RlmN (348 aa).

Glu-90 acts as the Proton acceptor in catalysis. Residues 96–324 (AAERLTVCVS…ASVRHTRGLE (229 aa)) enclose the Radical SAM core domain. Cysteines 103 and 329 form a disulfide. The [4Fe-4S] cluster site is built by Cys-110, Cys-114, and Cys-117. S-adenosyl-L-methionine is bound by residues 157–158 (GE), Ser-187, 210–212 (SLH), and Asn-286. Catalysis depends on Cys-329, which acts as the S-methylcysteine intermediate.

It belongs to the radical SAM superfamily. RlmN family. It depends on [4Fe-4S] cluster as a cofactor.

The protein localises to the cytoplasm. The enzyme catalyses adenosine(2503) in 23S rRNA + 2 reduced [2Fe-2S]-[ferredoxin] + 2 S-adenosyl-L-methionine = 2-methyladenosine(2503) in 23S rRNA + 5'-deoxyadenosine + L-methionine + 2 oxidized [2Fe-2S]-[ferredoxin] + S-adenosyl-L-homocysteine. It catalyses the reaction adenosine(37) in tRNA + 2 reduced [2Fe-2S]-[ferredoxin] + 2 S-adenosyl-L-methionine = 2-methyladenosine(37) in tRNA + 5'-deoxyadenosine + L-methionine + 2 oxidized [2Fe-2S]-[ferredoxin] + S-adenosyl-L-homocysteine. In terms of biological role, specifically methylates position 2 of adenine 2503 in 23S rRNA and position 2 of adenine 37 in tRNAs. This Gloeobacter violaceus (strain ATCC 29082 / PCC 7421) protein is Probable dual-specificity RNA methyltransferase RlmN.